The following is a 292-amino-acid chain: Porphobilinogen deaminase (292 aa).

Cys236 is subject to S-(dipyrrolylmethanemethyl)cysteine.

The protein belongs to the HMBS family. As to quaternary structure, monomer. Dipyrromethane is required as a cofactor.

The catalysed reaction is 4 porphobilinogen + H2O = hydroxymethylbilane + 4 NH4(+). It participates in porphyrin-containing compound metabolism; protoporphyrin-IX biosynthesis; coproporphyrinogen-III from 5-aminolevulinate: step 2/4. Functionally, tetrapolymerization of the monopyrrole PBG into the hydroxymethylbilane pre-uroporphyrinogen in several discrete steps. This is Porphobilinogen deaminase from Wolbachia sp. subsp. Drosophila simulans (strain wRi).